The primary structure comprises 86 residues: Beta-toxin To4 (86 aa).

An N-terminal signal peptide occupies residues 1-20; it reads MTRFVLFISCFFLIGMIVEC. One can recognise an LCN-type CS-alpha/beta domain in the interval 21–83; it reads KDGYLMEYGG…IWNRATNKCG (63 aa). Cystine bridges form between Cys-31-Cys-82, Cys-35-Cys-57, Cys-43-Cys-63, and Cys-47-Cys-65. Cys-82 is subject to Cysteine amide.

This sequence belongs to the long (4 C-C) scorpion toxin superfamily. Sodium channel inhibitor family. Beta subfamily. As to expression, expressed by the venom gland.

It is found in the secreted. Beta toxins bind voltage-independently at site-4 of sodium channels (Nav) and shift the voltage of activation toward more negative potentials thereby affecting sodium channel activation and promoting spontaneous and repetitive firing. This toxin shows moderate inhibition of Nav1.1/SCN1A, Nav1.2/SCN2A, and Nav1.4/SCN4A, and promotes a left voltage shift on these channels. It exhibits similar potency on Nav1.2/SCN2A and Nav1.4/SCN4A (40-50% peak current inhibition at 0.5 uM), and weaker inhibition on Nav1.2 (20-30% peak current inhibition at 0.5 uM). This is Beta-toxin To4 from Tityus obscurus (Amazonian scorpion).